A 65-amino-acid chain; its full sequence is Ferredoxin-1 (65 aa).

Residues 2–30 form the 4Fe-4S ferredoxin-type domain; the sequence is AMKIDPELCTSCGDCEPVCPTNAIAPKKG. Positions 10, 13, 16, 20, 39, 42, 51, and 55 each coordinate [4Fe-4S] cluster.

[4Fe-4S] cluster serves as cofactor.

Ferredoxins are iron-sulfur proteins that transfer electrons in a wide variety of metabolic reactions. This ferredoxin probably participates in nitrogen fixation. The protein is Ferredoxin-1 (fdxN) of Rhodobacter capsulatus (Rhodopseudomonas capsulata).